The sequence spans 743 residues: Ectonucleotide pyrophosphatase/phosphodiesterase C27A7.3 (743 aa).

Residues 1-23 are Cytoplasmic-facing; the sequence is MSNRVVDVNSKKTGTSWKKKLMK. A helical; Signal-anchor for type II membrane protein transmembrane segment spans residues 24 to 44; the sequence is IVIWSLAMLSFIAGLVLLGLV. Topologically, residues 45-743 are lumenal; the sequence is AAATISGSKN…LRRNITTSLW (699 aa). Zn(2+) contacts are provided by Asp87 and Thr123. Thr123 (nucleophile) is an active-site residue. The N-linked (GlcNAc...) asparagine glycan is linked to Asn195. Positions 243, 247, 286, and 287 each coordinate Zn(2+). Asn293 and Asn320 each carry an N-linked (GlcNAc...) asparagine glycan. A Zn(2+)-binding site is contributed by His383. 3 N-linked (GlcNAc...) asparagine glycosylation sites follow: Asn406, Asn434, and Asn536. The Ca(2+) site is built by Asp635, Asn637, Asp639, Ile641, and Asp643. N-linked (GlcNAc...) asparagine glycosylation is present at Asn737.

It belongs to the nucleotide pyrophosphatase/phosphodiesterase family. The cofactor is Zn(2+). It depends on Ca(2+) as a cofactor.

Its subcellular location is the membrane. Functionally, probable phosphodiesterase. The protein is Ectonucleotide pyrophosphatase/phosphodiesterase C27A7.3 of Caenorhabditis elegans.